A 116-amino-acid chain; its full sequence is MFSWIKGKEGEDKAVEYLRNSGYRILERNFRSRFGEIDIIAEDNGTIVIVEVRSKGSTGYGYPEESIDHKKVRKIIKTAQFYLLKRDIKGKQVRFDIISIVNNNIFHIKNAFDLDY.

It belongs to the UPF0102 family.

The protein is UPF0102 protein PERMA_0362 of Persephonella marina (strain DSM 14350 / EX-H1).